A 52-amino-acid polypeptide reads, in one-letter code: Phospholamban (52 aa).

Position 1 is an N-acetylmethionine (M1). Topologically, residues 1–31 are cytoplasmic; it reads MEKVQYLTRSAIRRASTIEMPQQARQNLQNL. S16 is subject to Phosphoserine; by PKA. T17 carries the post-translational modification Phosphothreonine; by CaMK2. The helical transmembrane segment at 32-52 threads the bilayer; the sequence is FINFCLILICLLLICIIVMLL. C36 is lipidated: S-palmitoyl cysteine.

This sequence belongs to the phospholamban family. Homopentamer. Can also form heterooligomers with other sarcoplasmic/endoplasmic reticulum calcium ATPase (SERCA) regulators ARLN, ERLN, SLN and STRIT1/DWORF. Monomer. Interacts with HAX1. Interacts as a monomer with ATP2A2; the interaction decreases ATP2A2 Ca(2+) affinity. Interacts with VMP1; VMP1 competes with PLN and SLN to prevent them from forming an inhibitory complex with ATP2A2. Interacts with S100A1 in a Ca(2+)-dependent manner. Post-translationally, phosphorylated at Thr-17 by CaMK2, and in response to beta-adrenergic stimulation. Phosphorylation by DMPK may stimulate sarcoplasmic reticulum calcium uptake in cardiomyocytes. Phosphorylation by PKA abolishes the inhibition of ATP2A2-mediated calcium uptake. Palmitoylated by ZDHHC16, promoting formation of the homopentamer. In terms of processing, in elongated spermatids, proteolytically cleaved by SPPL2C which modulates intracellular Ca(2+) homeostasis. As to expression, expressed in testis (at protein level). In brain, expressed specifically in GABAergic GAD67+ neurons of the thalamic reticular nucleus where it colocalizes with ATP2A2/SERCA2 (at protein level). Expressed in the bladder and in the atria and ventricles of the heart.

The protein localises to the endoplasmic reticulum membrane. It localises to the sarcoplasmic reticulum membrane. It is found in the mitochondrion membrane. The protein resides in the membrane. Functionally, reversibly inhibits the activity of ATP2A2/SERCA2 in cardiac sarcoplasmic reticulum by decreasing the apparent affinity of the ATPase for Ca(2+). Binds preferentially to the ATP-bound E1 conformational form of ATP2A2 which predominates at low Ca(2+) concentrations during the diastolic phase of the cardiac cycle. Inhibits ATP2A2 Ca(2+) affinity by disrupting its allosteric activation by ATP. Modulates the contractility of the heart muscle in response to physiological stimuli via its effects on ATP2A2. Modulates calcium re-uptake during muscle relaxation and plays an important role in calcium homeostasis in the heart muscle. The degree of ATP2A2 inhibition depends on the oligomeric state of PLN. ATP2A2 inhibition is alleviated by PLN phosphorylation. Also inhibits the activity of ATP2A3/SERCA3. Controls intracellular Ca(2+) levels in elongated spermatids and may play a role in germ cell differentiation. In the thalamic reticular nucleus of the brain, plays a role in the regulation of sleep patterns and executive functioning. This Mus musculus (Mouse) protein is Phospholamban.